The following is a 162-amino-acid chain: NADH-quinone oxidoreductase subunit I 1 (162 aa).

4Fe-4S ferredoxin-type domains follow at residues 52 to 82 and 93 to 122; these read LRRY…IEAG and VRYD…EGPN. Residues Cys62, Cys65, Cys68, Cys72, Cys102, Cys105, Cys108, and Cys112 each contribute to the [4Fe-4S] cluster site.

The protein belongs to the complex I 23 kDa subunit family. NDH-1 is composed of 14 different subunits. Subunits NuoA, H, J, K, L, M, N constitute the membrane sector of the complex. Requires [4Fe-4S] cluster as cofactor.

Its subcellular location is the cell inner membrane. The enzyme catalyses a quinone + NADH + 5 H(+)(in) = a quinol + NAD(+) + 4 H(+)(out). In terms of biological role, NDH-1 shuttles electrons from NADH, via FMN and iron-sulfur (Fe-S) centers, to quinones in the respiratory chain. The immediate electron acceptor for the enzyme in this species is believed to be ubiquinone. Couples the redox reaction to proton translocation (for every two electrons transferred, four hydrogen ions are translocated across the cytoplasmic membrane), and thus conserves the redox energy in a proton gradient. The chain is NADH-quinone oxidoreductase subunit I 1 from Rhodopseudomonas palustris (strain ATCC BAA-98 / CGA009).